We begin with the raw amino-acid sequence, 273 residues long: Proteasome subunit beta type-10 (273 aa).

At M1 the chain carries N-acetylmethionine. Positions 1–39 (MLKPALEPRGGFSFENCQRNASLERVLPGLKVPHARKTG) are cleaved as a propeptide — removed in mature form. Residue T40 is the Nucleophile of the active site. Phosphoserine is present on S230.

This sequence belongs to the peptidase T1B family. In terms of assembly, the 26S proteasome consists of a 20S proteasome core and two 19S regulatory subunits. The 20S proteasome core is composed of 28 subunits that are arranged in four stacked rings, resulting in a barrel-shaped structure. The two end rings are each formed by seven alpha subunits, and the two central rings are each formed by seven beta subunits. The catalytic chamber with the active sites is on the inside of the barrel. Component of the immunoproteasome, where it displaces the equivalent housekeeping subunit PSMB7. Component of the spermatoproteasome, a form of the proteasome specifically found in testis. As to quaternary structure, (Microbial infection) Interacts with HIV-1 TAT protein. In terms of processing, autocleaved. The resulting N-terminal Thr residue of the mature subunit is responsible for the nucleophile proteolytic activity.

The protein resides in the cytoplasm. It is found in the nucleus. The catalysed reaction is Cleavage of peptide bonds with very broad specificity.. In terms of biological role, the proteasome is a multicatalytic proteinase complex which is characterized by its ability to cleave peptides with Arg, Phe, Tyr, Leu, and Glu adjacent to the leaving group at neutral or slightly basic pH. The proteasome has an ATP-dependent proteolytic activity. This subunit is involved in antigen processing to generate class I binding peptides. The protein is Proteasome subunit beta type-10 (PSMB10) of Homo sapiens (Human).